A 538-amino-acid chain; its full sequence is Pyruvate kinase (538 aa).

Phosphoserine is present on Ser45. Position 72 (Arg72) interacts with substrate. The K(+) site is built by Asn74, Ser76, Asp107, and Thr108. An ATP-binding site is contributed by 74 to 77 (NFSH). ATP is bound by residues Arg114 and Lys200. Glu265 is a Mg(2+) binding site. Gly288, Asp289, and Thr321 together coordinate substrate. Residue Asp289 participates in Mg(2+) binding.

Belongs to the pyruvate kinase family. As to quaternary structure, homotetramer. The cofactor is Mg(2+). K(+) is required as a cofactor.

The catalysed reaction is pyruvate + ATP = phosphoenolpyruvate + ADP + H(+). Its pathway is carbohydrate degradation; glycolysis; pyruvate from D-glyceraldehyde 3-phosphate: step 5/5. The chain is Pyruvate kinase (pki1) from Hypocrea jecorina (Trichoderma reesei).